A 488-amino-acid chain; its full sequence is MSFNNQSIDQLHDLLVKKEISATELTKATLEDIHAREQAVGSFITISDDMAIAQAKEIDDKGIDADNVMSGIPLAVKDNISTKGILTTAASKMLYNYEPIFDATAVEKLYAKDMIVIGKANMDEFAMGGSTETSYFKKTNNAWDHSKVPGGSSGGSAAAVASGQVRLSLGSDTGGSIRQPASFNGIVGMKPTYGRVSRFGLFAFGSSLDQIGPMSQTVKENAQLLTVISGHDVRDSTSSERTVGDFTAKIGQDIQGMKIALPKEYLGEGIAPGVKETIIKAAKHLEKLGAVIEEVSLPHSKYGVAVYYIIASSEASSNLQRFDGIRYGYRTENYKNLDDIYVNTRSEGFGDEVKRRIMLGTFSLSSGYYDAYYKKAGQVRSLIIQDFEKVFADYDLILGPTAPTTAFDLDSLNHDPVAMYLADILTIPVNLAGLPGISIPAGFDKGLPVGMQLIGPKFSEETIYQVAAAFEATTDYHKQQPKIFGGEN.

Catalysis depends on charge relay system residues lysine 77 and serine 152. Residue serine 176 is the Acyl-ester intermediate of the active site.

It belongs to the amidase family. GatA subfamily. Heterotrimer of A, B and C subunits.

It carries out the reaction L-glutamyl-tRNA(Gln) + L-glutamine + ATP + H2O = L-glutaminyl-tRNA(Gln) + L-glutamate + ADP + phosphate + H(+). Its function is as follows. Allows the formation of correctly charged Gln-tRNA(Gln) through the transamidation of misacylated Glu-tRNA(Gln) in organisms which lack glutaminyl-tRNA synthetase. The reaction takes place in the presence of glutamine and ATP through an activated gamma-phospho-Glu-tRNA(Gln). The chain is Glutamyl-tRNA(Gln) amidotransferase subunit A from Streptococcus agalactiae serotype III (strain NEM316).